Here is a 168-residue protein sequence, read N- to C-terminus: 3-dehydroquinate dehydratase (168 aa).

Tyrosine 22 functions as the Proton acceptor in the catalytic mechanism. Asparagine 76, histidine 82, and aspartate 89 together coordinate substrate. Histidine 102 functions as the Proton donor in the catalytic mechanism. Substrate contacts are provided by residues leucine 103–threonine 104 and arginine 113.

It belongs to the type-II 3-dehydroquinase family. As to quaternary structure, homododecamer.

It catalyses the reaction 3-dehydroquinate = 3-dehydroshikimate + H2O. Its pathway is metabolic intermediate biosynthesis; chorismate biosynthesis; chorismate from D-erythrose 4-phosphate and phosphoenolpyruvate: step 3/7. Functionally, catalyzes a trans-dehydration via an enolate intermediate. This Helicobacter acinonychis (strain Sheeba) protein is 3-dehydroquinate dehydratase.